Reading from the N-terminus, the 524-residue chain is Phosphoenolpyruvate carboxykinase (ATP) (524 aa).

Substrate-binding residues include Arg52, Tyr188, and Lys194. ATP-binding positions include Lys194, His213, and Gly229–Thr237. Residues Lys194 and His213 each coordinate Mn(2+). Asp250 lines the Mn(2+) pocket. Residues Glu278, Arg314, and Thr439 each coordinate ATP. Arg314 serves as a coordination point for substrate.

It belongs to the phosphoenolpyruvate carboxykinase (ATP) family. Requires Mn(2+) as cofactor.

Its subcellular location is the cytoplasm. The catalysed reaction is oxaloacetate + ATP = phosphoenolpyruvate + ADP + CO2. It participates in carbohydrate biosynthesis; gluconeogenesis. Functionally, involved in the gluconeogenesis. Catalyzes the conversion of oxaloacetate (OAA) to phosphoenolpyruvate (PEP) through direct phosphoryl transfer between the nucleoside triphosphate and OAA. The protein is Phosphoenolpyruvate carboxykinase (ATP) of Campylobacter jejuni subsp. doylei (strain ATCC BAA-1458 / RM4099 / 269.97).